We begin with the raw amino-acid sequence, 489 residues long: Protein LMBR1L (489 aa).

The Extracellular portion of the chain corresponds to 1–21 (MEAPDCEVLSVREQLFHERIR). Residues 1–59 (MEAPDCEVLSVREQLFHERIRECIISTLLFATLYILCHIFLTRFKKPAEFTTVDDADAT) are interaction with LGB. Residues 1 to 76 (MEAPDCEVLS…LCTFTLAIAL (76 aa)) are LCN1-binding. The helical transmembrane segment at 22-42 (ECIISTLLFATLYILCHIFLT) threads the bilayer. Residues 43–66 (RFKKPAEFTTVDDADATVNKIALE) are Cytoplasmic-facing. The helical transmembrane segment at 67–87 (LCTFTLAIALGAVLLLPFSII) threads the bilayer. The Extracellular portion of the chain corresponds to 88-114 (SNEVLLSLPRNYYIQWLNGSLIHGLWN). Residues 115 to 135 (LVFLFSNLSLIFLMPFAYFFT) form a helical membrane-spanning segment. At 136–154 (ESEGFAGSRKGVLGRVYET) the chain is on the cytoplasmic side. A helical membrane pass occupies residues 155–175 (VVMLMLLTLLVLGMVWVASAI). At 176 to 196 (VDNNKASRESLYDFWEYYLPY) the chain is on the extracellular side. A helical transmembrane segment spans residues 197 to 217 (LYSCISFLGVLLLLVCTPLGL). Residues 218 to 305 (ARMFSVTGKL…NLGYPLAMLC (88 aa)) lie on the Cytoplasmic side of the membrane. The helical transmembrane segment at 306-326 (LLVLTGLSVLIVAIHILELLI) threads the bilayer. At 327 to 350 (DEAAMPRGMQGASLGQVSFSKLGS) the chain is on the extracellular side. Residues 351 to 371 (FGAVVQVVLIFYLMVSSVVGF) traverse the membrane as a helical segment. Residues 372-388 (YSSPLFRSLRPRWHDTA) lie on the Cytoplasmic side of the membrane. Residues 389-409 (MTQIIGNCVCLLVLSSALPVF) form a helical membrane-spanning segment. At 410–431 (SRTLGLTRFDLLGDFGRFNWLG) the chain is on the extracellular side. The helical transmembrane segment at 432–452 (NFYIVFLYNAAFAGLTTLCLV) threads the bilayer. Over 453–489 (KTFTAAVRAELIRAFGLDRLPLPVSGFPRASRKTQHQ) the chain is Cytoplasmic.

Belongs to the LIMR family. In terms of assembly, dimer. Can also form higher oligomers. Interacts with LCN1; this interaction mediates the endocytosis of LCN1. Interacts with UBAC2, FAF2, VCP, AMFR, ZNRF3, CTNNB1, LRP6, GSK3A, GSK3B, FZD6, DVL2 and RNF43. Interaction with LGB and SCGB1A1 is controversial.

The protein resides in the cell membrane. The protein localises to the endoplasmic reticulum membrane. In terms of biological role, plays an essential role in lymphocyte development by negatively regulating the canonical Wnt signaling pathway. In association with UBAC2 and E3 ubiquitin-protein ligase AMFR, promotes the ubiquitin-mediated degradation of CTNNB1 and Wnt receptors FZD6 and LRP6. LMBR1L stabilizes the beta-catenin destruction complex that is required for regulating CTNNB1 levels. Acts as a LCN1 receptor and can mediate its endocytosis. This is Protein LMBR1L (LMBR1L) from Macaca fascicularis (Crab-eating macaque).